Consider the following 188-residue polypeptide: ATP synthase subunit b 2 (188 aa).

Residues 41-61 form a helical membrane-spanning segment; that stretch reads FFWLVISFGFFYFFIARVIVP.

It belongs to the ATPase B chain family. As to quaternary structure, F-type ATPases have 2 components, F(1) - the catalytic core - and F(0) - the membrane proton channel. F(1) has five subunits: alpha(3), beta(3), gamma(1), delta(1), epsilon(1). F(0) has three main subunits: a(1), b(2) and c(10-14). The alpha and beta chains form an alternating ring which encloses part of the gamma chain. F(1) is attached to F(0) by a central stalk formed by the gamma and epsilon chains, while a peripheral stalk is formed by the delta and b chains.

The protein localises to the cell inner membrane. Its function is as follows. F(1)F(0) ATP synthase produces ATP from ADP in the presence of a proton or sodium gradient. F-type ATPases consist of two structural domains, F(1) containing the extramembraneous catalytic core and F(0) containing the membrane proton channel, linked together by a central stalk and a peripheral stalk. During catalysis, ATP synthesis in the catalytic domain of F(1) is coupled via a rotary mechanism of the central stalk subunits to proton translocation. Component of the F(0) channel, it forms part of the peripheral stalk, linking F(1) to F(0). The b'-subunit is a diverged and duplicated form of b found in plants and photosynthetic bacteria. This Bartonella bacilliformis (strain ATCC 35685 / KC583 / Herrer 020/F12,63) protein is ATP synthase subunit b 2 (atpF2).